An 86-amino-acid polypeptide reads, in one-letter code: Apolipoprotein C-I (86 aa).

The signal sequence occupies residues 1-26 (MRLFLSLPVLVVVLLMILEGPGPAQG).

It belongs to the apolipoprotein C1 family.

The protein resides in the secreted. Functionally, inhibitor of lipoprotein binding to the low density lipoprotein (LDL) receptor, LDL receptor-related protein, and very low density lipoprotein (VLDL) receptor. Associates with high density lipoproteins (HDL) and the triacylglycerol-rich lipoproteins in the plasma and makes up about 10% of the protein of the VLDL and 2% of that of HDL. Appears to interfere directly with fatty acid uptake and is also the major plasma inhibitor of cholesteryl ester transfer protein (CETP). Binds free fatty acids and reduces their intracellular esterification. Modulates the interaction of APOE with beta-migrating VLDL and inhibits binding of beta-VLDL to the LDL receptor-related protein. This Saimiri boliviensis boliviensis (Bolivian squirrel monkey) protein is Apolipoprotein C-I (APOC1).